The following is a 444-amino-acid chain: L-seryl-tRNA(Sec) selenium transferase (444 aa).

An N6-(pyridoxal phosphate)lysine modification is found at Lys284.

The protein belongs to the SelA family. Requires pyridoxal 5'-phosphate as cofactor.

The protein localises to the cytoplasm. It catalyses the reaction L-seryl-tRNA(Sec) + selenophosphate + H(+) = L-selenocysteinyl-tRNA(Sec) + phosphate. It participates in aminoacyl-tRNA biosynthesis; selenocysteinyl-tRNA(Sec) biosynthesis; selenocysteinyl-tRNA(Sec) from L-seryl-tRNA(Sec) (bacterial route): step 1/1. Its function is as follows. Converts seryl-tRNA(Sec) to selenocysteinyl-tRNA(Sec) required for selenoprotein biosynthesis. This is L-seryl-tRNA(Sec) selenium transferase from Wolinella succinogenes (strain ATCC 29543 / DSM 1740 / CCUG 13145 / JCM 31913 / LMG 7466 / NCTC 11488 / FDC 602W) (Vibrio succinogenes).